The following is a 331-amino-acid chain: Hydroxysteroid dehydrogenase-like protein 1 (331 aa).

The interval 2–82 (AAVDRFNLLY…TGSTDGIGKA (81 aa)) is required for mitochondria translocation. Residues 74–80 (GSTDGIG) and aspartate 125 each bind NADP(+). Serine 205 serves as a coordination point for substrate. The Proton acceptor role is filled by tyrosine 218. Residue lysine 222 participates in NADP(+) binding.

It belongs to the short-chain dehydrogenases/reductases (SDR) family. 17-beta-HSD 3 subfamily.

It localises to the mitochondrion. May catalyze the metabolism of steroid hormones and thus play an important role in sex differentiation, the emergence and maintenance of the secondary sexual characters, and the regulation of endocrine. This Gallus gallus (Chicken) protein is Hydroxysteroid dehydrogenase-like protein 1 (HSDL1).